The chain runs to 594 residues: Cytoplasmic polyadenylation element-binding protein 1 (594 aa).

The interval 1 to 33 (MQHQVKACGDSKSTTRSLQGNRRSGAASLKKPS) is disordered. The segment covering 11–22 (SKSTTRSLQGNR) has biased composition (polar residues). RRM domains lie at 257 to 364 (RKVF…PWRL) and 381 to 452 (RTVF…HAET). Residues 519–560 (TGDQTRILPRPPHHQSSHYSPRSHQMMNHDSMESSNQSRGNT) form a disordered region. A compositionally biased stretch (polar residues) spans 535-560 (SHYSPRSHQMMNHDSMESSNQSRGNT).

As to quaternary structure, interacts with fbf-1.

In terms of biological role, cytoplasmic polyadenylation element binding protein that binds to and regulates the translation of specific mRNAs. Essential for progression through meiosis. Involved in spermatogenesis. This is Cytoplasmic polyadenylation element-binding protein 1 (cpb-1) from Caenorhabditis remanei (Caenorhabditis vulgaris).